Reading from the N-terminus, the 90-residue chain is MPIEPGQEVIFVVPIRKIKKRVPRWKRAPRAAKFVREWIARHAKAEEVKLEPAVNEKLWERGAEKPPNKLRVKVVVEVVDGKRVAKVSLA.

The protein belongs to the eukaryotic ribosomal protein eL31 family.

The chain is Large ribosomal subunit protein eL31 from Thermococcus gammatolerans (strain DSM 15229 / JCM 11827 / EJ3).